A 229-amino-acid chain; its full sequence is Sugar fermentation stimulation protein homolog (229 aa).

Belongs to the SfsA family.

This is Sugar fermentation stimulation protein homolog from Caldanaerobacter subterraneus subsp. tengcongensis (strain DSM 15242 / JCM 11007 / NBRC 100824 / MB4) (Thermoanaerobacter tengcongensis).